Reading from the N-terminus, the 631-residue chain is Coiled-coil domain-containing protein 93 (631 aa).

Disordered regions lie at residues 1–23 (MGLP…DEEQ) and 214–243 (QSKM…HEED). A sufficient for interaction with CCDC22 region spans residues 1–430 (MGLPRGPEGQ…LKAERAPRGD (430 aa)). Basic and acidic residues predominate over residues 215–225 (SKMEKAEDKKT). Phosphoserine occurs at positions 298, 301, and 305. A coiled-coil region spans residues 309-631 (LGTSQLHRRK…LLSKVKAKAS (323 aa)). Residues 421–433 (LKAERAPRGDEKT) show a composition bias toward basic and acidic residues. Residues 421–447 (LKAERAPRGDEKTLSSGEPPGTLTSAM) are disordered. Residues 448–631 (THDEDLDRRY…LLSKVKAKAS (184 aa)) form a sufficient for interaction with WASHC2C region.

The protein belongs to the CCDC93 family. As to quaternary structure, component of the commander complex consisting of the CCC subcomplex and the retriever subcomplex. Component of the CCC (COMMD/CCDC22/CCDC93) subcomplex consisting of COMMD1, COMMD2, COMMD3, COMMD4, COMMD5, COMMD6, COMMD7, COMMD8, COMMD9, COMMD10, CCDC22 and CCDC93. Forms a coiled-coil heterodimer with CCDC22; this heterodimer interacts with the guanine nucleotide exchange factor DENND10; the interaction is direct. Interacts with WASHC1. Interacts directly with WASHC2C. Interacts with SNX17 and SNX31.

The protein resides in the early endosome. Functionally, component of the commander complex that is essential for endosomal recycling of transmembrane cargos; the commander complex is composed of composed of the CCC subcomplex and the retriever subcomplex. Component of the CCC complex, which is involved in the regulation of endosomal recycling of surface proteins, including integrins, signaling receptor and channels. The CCC complex associates with SNX17, retriever and WASH complexes to prevent lysosomal degradation and promote cell surface recycling of numerous cargos such as integrins ITGA5:ITGB1. Involved in copper-dependent ATP7A trafficking between the trans-Golgi network and vesicles in the cell periphery; the function is proposed to depend on its association within the CCC complex and cooperation with the WASH complex on early endosomes and is dependent on its interaction with WASHC2C. In terms of biological role, (Microbial infection) The CCC complex, in collaboration with the heterotrimeric retriever complex, mediates the exit of human papillomavirus to the cell surface. The polypeptide is Coiled-coil domain-containing protein 93 (CCDC93) (Homo sapiens (Human)).